Here is a 397-residue protein sequence, read N- to C-terminus: Acetate kinase (397 aa).

N7 contributes to the Mg(2+) binding site. An ATP-binding site is contributed by K14. R90 lines the substrate pocket. Residue D147 is the Proton donor/acceptor of the active site. Residues 207–211 (HLGNG), 282–284 (DFR), and 330–334 (GIGEN) contribute to the ATP site. A Mg(2+)-binding site is contributed by E384.

The protein belongs to the acetokinase family. As to quaternary structure, homodimer. Mg(2+) serves as cofactor. The cofactor is Mn(2+).

The protein localises to the cytoplasm. The catalysed reaction is acetate + ATP = acetyl phosphate + ADP. It functions in the pathway metabolic intermediate biosynthesis; acetyl-CoA biosynthesis; acetyl-CoA from acetate: step 1/2. Functionally, catalyzes the formation of acetyl phosphate from acetate and ATP. Can also catalyze the reverse reaction. The chain is Acetate kinase from Agathobacter rectalis (strain ATCC 33656 / DSM 3377 / JCM 17463 / KCTC 5835 / VPI 0990) (Eubacterium rectale).